We begin with the raw amino-acid sequence, 501 residues long: MDALLQLKGIDKAFPGVKALSGAALNVYPGRVMALMGENGAGKSTMMKVLTGIYTRDAGSLLWLGKETTFNGPKSSQEAGIGIIHQELNLIPQLTIAENIFLGREFVNRFGKIDWKKMYAEADQLLAKLNLRFKSDKLVGELSIGDQQMVEIAKVLSFESKVIIMDEPTDALTDTETESLFRVIRELKSQRRGIVYISHRMKEIFEICDDVTVFRDGQFIAEREVATLTEDSLIEMMVGRKLEDQYPHLDNAPGEIRLKVDNLCGPGVNDVSFVLRKGEILGISGLMGAGRTELMKVLYGAMPRTSGYVTLDGHEVVTRSPQDGLANGIVYISEDRKRDGLVLGMSVKENMSLTALDYFSRAGGSLKHKDEQQAVGDFIRLFNVKTPSMEQAIGLLSGGNQQKVAIARGLMTRPKVLILDEPTRGVDVGAKKEIYQLINQFKADGLSIILVSSEMPEVLGMSDRIIVMHEGHLSGEFTREQATQEVLMAAAVGKLNRVNQE.

ABC transporter domains are found at residues 5-241 (LQLK…VGRK) and 252-495 (APGE…VGKL). Position 37–44 (37–44 (GENGAGKS)) interacts with ATP.

The protein belongs to the ABC transporter superfamily. Ribose importer (TC 3.A.1.2.1) family. In terms of assembly, the complex is composed of an ATP-binding protein (RbsA), two transmembrane proteins (RbsC) and a solute-binding protein (RbsB).

Its subcellular location is the cell inner membrane. It carries out the reaction D-ribose(out) + ATP + H2O = D-ribose(in) + ADP + phosphate + H(+). In terms of biological role, part of the ABC transporter complex RbsABC involved in ribose import. Responsible for energy coupling to the transport system. The polypeptide is Ribose import ATP-binding protein RbsA (Salmonella paratyphi A (strain ATCC 9150 / SARB42)).